The chain runs to 733 residues: Hypermethylated in cancer 1 protein (733 aa).

The BTB domain occupies 47-110 (CDVIIVVQNA…IYTGRLTDSV (64 aa)). The tract at residues 154–315 (KYCHLRGGGS…PFRGSGGSPG (162 aa)) is mediates HDAC-dependent transcriptional repression. R159 is modified (omega-N-methylarginine). Residues 189–209 (YSSPAGPPPPPAAEPPSGPDA) form a disordered region. Residues 193–206 (AGPPPPPAAEPPSG) show a composition bias toward pro residues. Residue S237 is modified to Phosphoserine. The interval 241–247 (GLDLSKK) is interaction with CTBP1. The disordered stretch occupies residues 241-421 (GLDLSKKSPP…PGGHLEGYPC (181 aa)). S248 is modified (phosphoserine). Residue K333 is modified to N6-acetyllysine; alternate. Residue K333 forms a Glycyl lysine isopeptide (Lys-Gly) (interchain with G-Cter in SUMO); alternate linkage. Residues 344–361 (ELVRDRGSPGERLEERGG) show a composition bias toward basic and acidic residues. S366 carries the post-translational modification Phosphoserine. Residues 368-380 (GGPPLGLVPPPRY) are compositionally biased toward pro residues. 5 C2H2-type zinc fingers span residues 437 to 464 (YVCIPCGKGFPSSEQLNAHVEAHVEEEE), 507 to 534 (YRCASCDKSYKDPATLRQHEKTHWLTRP), 535 to 562 (YPCTICGKKFTQRGTMTRHMRSHLGLKP), 563 to 590 (FACDACGMRFTRQYRLTEHMRIHSGEKP), and 591 to 618 (YECQVCGGKFAQQRNLISHMKMHAVGGA). S704 carries the post-translational modification Phosphoserine.

This sequence belongs to the krueppel C2H2-type zinc-finger protein family. Hic subfamily. As to quaternary structure, self-associates. Interacts with HIC2. Interacts with CTBP1 and CTBP2. Interacts with TCF7L2 and ARID1A. Interacts with MTA1 and MBD3; indicative for an association with the NuRD complex. Interacts with SIRT1. Post-translationally, acetylated on several residues, including Lys-333. Lys-333 is deacetylated by SIRT1. Sumoylated on Lys-333 by a PIAS family member, which enhances interaction with MTA1, positively regulates transcriptional repression activity and is enhanced by HDAC4. As to expression, ubiquitously expressed with highest levels in heart and lung.

It localises to the nucleus. In terms of biological role, transcriptional repressor. Recognizes and binds to the consensus sequence '5-[CG]NG[CG]GGGCA[CA]CC-3'. May act as a tumor suppressor. Involved in development of head, face, limbs and ventral body wall. Involved in down-regulation of SIRT1 and thereby is involved in regulation of p53/TP53-dependent apoptotic DNA-damage responses. The specific target gene promoter association seems to be depend on corepressors, such as CTBP1 or CTBP2 and MTA1. In cooperation with MTA1 (indicative for an association with the NuRD complex) represses transcription from CCND1/cyclin-D1 and CDKN1C/p57Kip2 specifically in quiescent cells. Involved in regulation of the Wnt signaling pathway probably by association with TCF7L2 and preventing TCF7L2 and CTNNB1 association with promoters of TCF-responsive genes. Seems to repress transcription from E2F1 and ATOH1 which involves ARID1A, indicative for the participation of a distinct SWI/SNF-type chromatin-remodeling complex. Probably represses transcription from ACKR3, FGFBP1 and EFNA1. The protein is Hypermethylated in cancer 1 protein (Hic1) of Mus musculus (Mouse).